Reading from the N-terminus, the 286-residue chain is Cbb3-type cytochrome c oxidase subunit CcoP (286 aa).

Transmembrane regions (helical) follow at residues 11–31 and 62–82; these read FGLI…SSLI and VGWI…FFFG. Cytochrome c domains follow at residues 116–195 and 205–286; these read ELVD…MAEL and QLID…LSNR. Heme c-binding residues include Cys-129, Cys-132, His-133, Met-174, Cys-219, Cys-222, His-223, and Met-264.

It belongs to the CcoP / FixP family. Component of the cbb3-type cytochrome c oxidase at least composed of CcoN, CcoO, CcoQ and CcoP. Requires heme c as cofactor.

Its subcellular location is the cell inner membrane. Its pathway is energy metabolism; oxidative phosphorylation. Its function is as follows. C-type cytochrome. Part of the cbb3-type cytochrome c oxidase complex. CcoP subunit is required for transferring electrons from donor cytochrome c via its heme groups to CcoO subunit. From there, electrons are shuttled to the catalytic binuclear center of CcoN subunit where oxygen reduction takes place. The complex also functions as a proton pump. The sequence is that of Cbb3-type cytochrome c oxidase subunit CcoP from Helicobacter pylori (strain ATCC 700392 / 26695) (Campylobacter pylori).